We begin with the raw amino-acid sequence, 317 residues long: Acetyl-coenzyme A carboxylase carboxyl transferase subunit alpha (317 aa).

Positions 40–293 (LEKRSADALK…GDIIAASLRS (254 aa)) constitute a CoA carboxyltransferase C-terminal domain.

This sequence belongs to the AccA family. Acetyl-CoA carboxylase is a heterohexamer composed of biotin carboxyl carrier protein (AccB), biotin carboxylase (AccC) and two subunits each of ACCase subunit alpha (AccA) and ACCase subunit beta (AccD).

It is found in the cytoplasm. The enzyme catalyses N(6)-carboxybiotinyl-L-lysyl-[protein] + acetyl-CoA = N(6)-biotinyl-L-lysyl-[protein] + malonyl-CoA. It functions in the pathway lipid metabolism; malonyl-CoA biosynthesis; malonyl-CoA from acetyl-CoA: step 1/1. Component of the acetyl coenzyme A carboxylase (ACC) complex. First, biotin carboxylase catalyzes the carboxylation of biotin on its carrier protein (BCCP) and then the CO(2) group is transferred by the carboxyltransferase to acetyl-CoA to form malonyl-CoA. This chain is Acetyl-coenzyme A carboxylase carboxyl transferase subunit alpha, found in Brucella melitensis biotype 2 (strain ATCC 23457).